The chain runs to 309 residues: Anamorsin (309 aa).

The segment at 6–172 (ISPGQLVAVF…KPNFEVGSSS (167 aa)) is N-terminal SAM-like domain. Positions 173–222 (QLKLPNKKSSSVKPVVDPAAAKLWTLSANDMEDDSVDLIDSDELLDPEDL) are linker. Phosphoserine is present on residues S182, S183, and S213. Residues C235, C244, C247, and C249 each coordinate [2Fe-2S] cluster. The segment at 235–249 (CGEGKKRKACKNCTC) is fe-S binding site A. A Phosphoserine modification is found at S269. [4Fe-4S] cluster contacts are provided by C271, C274, C282, and C285. 2 short sequence motifs (cx2C motif) span residues 271–274 (CGNC) and 282–285 (CANC). The interval 271-285 (CGNCYLGDAFRCANC) is fe-S binding site B. 2 positions are modified to phosphoserine: S302 and S304.

It belongs to the anamorsin family. As to quaternary structure, monomer. Interacts with NDOR1. Interacts with CHCHD4. Requires [2Fe-2S] cluster as cofactor. [4Fe-4S] cluster serves as cofactor.

It localises to the cytoplasm. The protein localises to the nucleus. It is found in the mitochondrion intermembrane space. Functionally, component of the cytosolic iron-sulfur (Fe-S) protein assembly (CIA) machinery required for the maturation of extramitochondrial Fe-S proteins. Part of an electron transfer chain functioning in an early step of cytosolic Fe-S biogenesis, facilitating the de novo assembly of a [4Fe-4S] cluster on the scaffold complex NUBP1-NUBP2. Electrons are transferred to CIAPIN1 from NADPH via the FAD- and FMN-containing protein NDOR1. NDOR1-CIAPIN1 are also required for the assembly of the diferric tyrosyl radical cofactor of ribonucleotide reductase (RNR), probably by providing electrons for reduction during radical cofactor maturation in the catalytic small subunit. Has anti-apoptotic effects in the cell. Involved in negative control of cell death upon cytokine withdrawal. Promotes development of hematopoietic cells. In Mus musculus (Mouse), this protein is Anamorsin.